The chain runs to 379 residues: Sialidase-2 (379 aa).

An FRIP motif motif is present at residues 20-23 (YRIP). Substrate contacts are provided by arginine 21 and arginine 41. The active-site Proton acceptor is the aspartate 46. A BNR 1 repeat occupies 127-138 (VSSTDHGRTWSP). The substrate site is built by tyrosine 179 and tyrosine 181. A BNR 2 repeat occupies 197-208 (FISLDHGHTWKL). Substrate contacts are provided by glutamate 218, arginine 237, and arginine 303. The active site involves arginine 303. The active-site Nucleophile is tyrosine 333. Glutamate 354 is an active-site residue.

Belongs to the glycosyl hydrolase 33 family. In terms of tissue distribution, highly expressed in heart.

Its subcellular location is the cytoplasm. The protein localises to the cytosol. The enzyme catalyses Hydrolysis of alpha-(2-&gt;3)-, alpha-(2-&gt;6)-, alpha-(2-&gt;8)- glycosidic linkages of terminal sialic acid residues in oligosaccharides, glycoproteins, glycolipids, colominic acid and synthetic substrates.. The catalysed reaction is a ganglioside GD1a + H2O = a ganglioside GM1 + N-acetylneuraminate. It carries out the reaction a ganglioside GM1 + H2O = a ganglioside GA1 + N-acetylneuraminate. It catalyses the reaction a ganglioside GT1b + H2O = a ganglioside GD1b + N-acetylneuraminate. The enzyme catalyses a ganglioside GD1b + H2O = a ganglioside GM1 + N-acetylneuraminate. The catalysed reaction is a ganglioside GD3 + H2O = a ganglioside GM3 + N-acetylneuraminate. It carries out the reaction a ganglioside GM3 + H2O = a beta-D-galactosyl-(1-&gt;4)-beta-D-glucosyl-(1&lt;-&gt;1)-ceramide + N-acetylneuraminate. It catalyses the reaction a ganglioside GM2 + H2O = a ganglioside GA2 + N-acetylneuraminate. The enzyme catalyses a neolactoside IV(3)-alpha-NeuAc-nLc4Cer(d18:1(4E)) + H2O = a neolactoside nLc4Cer(d18:1(4E)) + N-acetylneuraminate. The catalysed reaction is N-acetyl-alpha-neuraminosyl-(2-&gt;3)-beta-D-galactosyl-(1-&gt;4)-D-glucose + H2O = lactose + N-acetylneuraminate. In terms of biological role, exo-alpha-sialidase that catalyzes the hydrolytic cleavage of the terminal sialic acid (N-acetylneuraminic acid, Neu5Ac) of a glycan moiety in the catabolism of glycolipids, glycoproteins and oligosacharides. Recognizes sialyl linkage positions of the glycan moiety as well as the supramolecular organization of the sialoglycoconjugate. Displays preference for alpha-(2-&gt;3)-sialylated GD1a and GT1B gangliosides over alpha-(2-&gt;8)-sialylated GD1b, in both monomeric forms and micelles. Hydrolyzes exclusively monomeric GM1 ganglioside, but has no activity toward the miscellar form. Has lower sialidase activity for glycoproteins such as fetuin and TF/transferrin that carry a mixture of alpha-(2-&gt;3) and alpha-(2-&gt;6)-sialyl linkages. Cleaves milk oligosaccharide alpha-(2-&gt;3)-sialyllactose, but is inactive toward isomer alpha-(2-&gt;6)-sialyllactose isomer. Has no activity toward colominic acid, a homomer of alpha-(2-&gt;8)-linked Neu5Ac residues. In Mus musculus (Mouse), this protein is Sialidase-2 (Neu2).